Consider the following 449-residue polypeptide: Probable magnetosome protein Mms48 (449 aa).

The signal sequence occupies residues 1–18; sequence MLLRLIVLLIFMSPVVFA. The helical transmembrane segment at 40-60 threads the bilayer; that stretch reads SNMPVLLAVILVVFLIFSALS. Residues 323–356 form a TPR repeat; the sequence is PDGHLAAGEAAFAVQKWGVARRHIMAALKIAPDA.

Its subcellular location is the magnetosome membrane. Its function is as follows. Overexpression in wild-type cells increases the number of cells with double magnetosome chains significantly. The 4 genes of this operon collectively influence magnetosome size and number. In Magnetospirillum gryphiswaldense (strain DSM 6361 / JCM 21280 / NBRC 15271 / MSR-1), this protein is Probable magnetosome protein Mms48.